The primary structure comprises 901 residues: Protein translocase subunit SecA (901 aa).

ATP-binding positions include Gln-87, 105-109 (GEGKT), and Asp-512. The tract at residues 858–891 (SHQDDDTAAAAALAAQTGDRKVGRNDPCPCGSGK) is disordered. Zn(2+)-binding residues include Cys-885, Cys-887, Cys-896, and His-897.

The protein belongs to the SecA family. As to quaternary structure, monomer and homodimer. Part of the essential Sec protein translocation apparatus which comprises SecA, SecYEG and auxiliary proteins SecDF-YajC and YidC. Requires Zn(2+) as cofactor.

The protein localises to the cell inner membrane. It localises to the cytoplasm. The catalysed reaction is ATP + H2O + cellular proteinSide 1 = ADP + phosphate + cellular proteinSide 2.. Its function is as follows. Part of the Sec protein translocase complex. Interacts with the SecYEG preprotein conducting channel. Has a central role in coupling the hydrolysis of ATP to the transfer of proteins into and across the cell membrane, serving both as a receptor for the preprotein-SecB complex and as an ATP-driven molecular motor driving the stepwise translocation of polypeptide chains across the membrane. This chain is Protein translocase subunit SecA, found in Escherichia fergusonii (strain ATCC 35469 / DSM 13698 / CCUG 18766 / IAM 14443 / JCM 21226 / LMG 7866 / NBRC 102419 / NCTC 12128 / CDC 0568-73).